A 2643-amino-acid chain; its full sequence is Ankyrin repeat domain-containing protein 11 (2643 aa).

Disordered regions lie at residues 1–90 and 128–170; these read MPKG…KEPV and SANS…RGET. Composition is skewed to basic and acidic residues over residues 21–54 and 69–90; these read MVEKQTGKKDKDKVSLTKTPKLDRSDGGKEVRER and EQKDSDTEKQGPERKRIKKEPV. Positions 128 to 155 are enriched in polar residues; the sequence is SANSPVDTTPKHPSQSTVCQKGTPNSAS. Residues 156-170 show a composition bias toward basic and acidic residues; it reads KTKDKVNKRNERGET. 4 ANK repeats span residues 167–196, 200–229, 233–262, and 266–292; these read RGETRLHRAAIRGDARRIKELISEGADVNV, AGWTALHEACNRGYYDIAKQLLAAGAEVNT, DDDTPLHDAANNGHYKVVKLLLRYGGNPQQ, and KGETPLKVANSPTMVNLLLGKGTYTSS. S276 bears the Phosphoserine mark. The segment at 289 to 365 is disordered; it reads YTSSEESSTE…DRVPPVDDKH (77 aa). The span at 295–305 shows a compositional bias: acidic residues; the sequence is SSTESSEEEDA. The segment covering 309-320 has biased composition (polar residues); the sequence is APSSSVDGNNTD. Composition is skewed to basic and acidic residues over residues 322–335 and 356–365; these read EFEKGLKLKAKNPE and DRVPPVDDKH. S408 is modified (phosphoserine). T410 carries the post-translational modification Phosphothreonine. S411 carries the phosphoserine modification. Disordered stretches follow at residues 423–504, 517–651, and 727–805; these read GEKL…CLKG, SLSA…GQCS, and DANK…DKEK. Basic and acidic residues predominate over residues 438-451; it reads KARESSSSRQQKEK. Residues 452–462 show a composition bias toward basic residues; it reads NKLKKKRKKET. The segment covering 463–475 has biased composition (basic and acidic residues); sequence KGKEVRFGKRSDK. A compositionally biased stretch (acidic residues) spans 484–494; sequence ESSESEEDDGD. The span at 517–528 shows a compositional bias: low complexity; the sequence is SLSASSTSSHGS. Positions 537-550 are enriched in basic and acidic residues; that stretch reads GHTDQHTKHWRTDN. Residues 557 to 574 are compositionally biased toward polar residues; it reads PAWSEVSSLSDSSRTGLT. The segment covering 575-588 has biased composition (low complexity); that stretch reads SESDCSSEGSSVES. Composition is skewed to basic residues over residues 591-602 and 633-646; these read PTRRKQEHRKRG and VKKHKTKHKHKHKE. S838 carries the post-translational modification Phosphoserine. Basic and acidic residues-rich tracts occupy residues 918-931 and 938-962; these read KNSEKRRDQTEKHK and SEKDKKRRESAEGGRDRRDGRIRSE. Disordered stretches follow at residues 918–962, 977–1037, and 1051–1074; these read KNSE…IRSE, SFKD…STLD, and EKKDGKEKHKDIHSKDRKASFDQL. Phosphoserine is present on S1070. The residue at position 1111 (T1111) is a Phosphothreonine. S1114 is subject to Phosphoserine. Disordered stretches follow at residues 1114–1388 and 1420–1711; these read SEDE…KDAS and LFSS…TPSC. 8 stretches are compositionally biased toward basic and acidic residues: residues 1133–1297, 1326–1343, 1355–1388, 1420–1444, 1464–1535, 1546–1564, 1577–1587, and 1595–1640; these read DTQR…DKIS, AEDKARDSACLSEKLREK, KSHERERAKKEKAEKKEKSEDYKDSISSVRKDAS, LFSSEKKDRSDPEREPAKRIEKELK, RERW…KGDS, VPSRDSGKKDSRPREKLLG, LSQKDLEIEER, and MKQM…KVKE. A Phosphoserine modification is found at S1676. Polar residues predominate over residues 1678 to 1695; that stretch reads RTEQSRPTGVPTPTSVVS. 2 positions are modified to phosphoserine: S1777 and S1832. 2 positions are modified to phosphotyrosine: Y1835 and Y1836. S1837 and S1844 each carry phosphoserine. Disordered regions lie at residues 1863 to 1900, 1981 to 2027, and 2111 to 2386; these read PPDSVFSNLPPKSSPSPRGELLSPAIEGTLPPDLGLPL, SPKH…EVKD, and HEAF…STQQ. S1981 and S2139 each carry phosphoserine. Composition is skewed to pro residues over residues 2150–2160 and 2175–2184; these read PVPPAESPPGP and EEPPAPPPQE. The segment covering 2273 to 2284 has biased composition (low complexity); it reads SAEASCVVAAAE. Over residues 2297-2315 the composition is skewed to basic and acidic residues; sequence PEPKPTSEVPKAPKVEEVP. An important for protein degradation region spans residues 2349-2643; the sequence is AKGRASEEED…VNDDFVLLPA (295 aa). Positions 2371–2386 are enriched in low complexity; that stretch reads RSSQQLQQQLNTSTQQ.

Interacts with the PAS region of the p160 coactivators. In terms of processing, subject to proteasomal degradation which is probably essential to regulate its activity.

The protein localises to the nucleus. In terms of biological role, chromatin regulator which modulates histone acetylation and gene expression in neural precursor cells. May recruit histone deacetylases (HDACs) to the p160 coactivators/nuclear receptor complex to inhibit ligand-dependent transactivation. Has a role in proliferation and development of cortical neural precursors. May also regulate bone homeostasis. The protein is Ankyrin repeat domain-containing protein 11 of Mus musculus (Mouse).